Consider the following 464-residue polypeptide: Elongation factor 1-alpha (464 aa).

The tr-type G domain occupies 5–242 (KTHINIVVIG…DSVVPPQRPT (238 aa)). GTP is bound by residues 14 to 21 (GHVDSGKS), 91 to 95 (DAPGH), and 153 to 156 (NKMD). Glu301 and Glu374 each carry 5-glutamyl glycerylphosphorylethanolamine.

This sequence belongs to the TRAFAC class translation factor GTPase superfamily. Classic translation factor GTPase family. EF-Tu/EF-1A subfamily.

It localises to the cytoplasm. Functionally, this protein promotes the GTP-dependent binding of aminoacyl-tRNA to the A-site of ribosomes during protein biosynthesis. This Onchocerca volvulus protein is Elongation factor 1-alpha.